The sequence spans 219 residues: 2-hydroxy-3-keto-5-methylthiopentenyl-1-phosphate phosphatase (219 aa).

It belongs to the HAD-like hydrolase superfamily. MtnX family.

It catalyses the reaction 2-hydroxy-5-methylsulfanyl-3-oxopent-1-enyl phosphate + H2O = 1,2-dihydroxy-5-(methylsulfanyl)pent-1-en-3-one + phosphate. The protein operates within amino-acid biosynthesis; L-methionine biosynthesis via salvage pathway; L-methionine from S-methyl-5-thio-alpha-D-ribose 1-phosphate: step 4/6. Its function is as follows. Dephosphorylates 2-hydroxy-3-keto-5-methylthiopentenyl-1-phosphate (HK-MTPenyl-1-P) yielding 1,2-dihydroxy-3-keto-5-methylthiopentene (DHK-MTPene). This is 2-hydroxy-3-keto-5-methylthiopentenyl-1-phosphate phosphatase from Bacillus thuringiensis (strain Al Hakam).